We begin with the raw amino-acid sequence, 372 residues long: Probable L-tyrosine/L-aspartate decarboxylase (372 aa).

Lysine 215 carries the N6-(pyridoxal phosphate)lysine modification.

The protein belongs to the group II decarboxylase family. MfnA subfamily. Requires pyridoxal 5'-phosphate as cofactor.

It catalyses the reaction L-tyrosine + H(+) = tyramine + CO2. The enzyme catalyses L-aspartate + H(+) = beta-alanine + CO2. Its pathway is cofactor biosynthesis; methanofuran biosynthesis. It functions in the pathway cofactor biosynthesis; coenzyme A biosynthesis. Functionally, catalyzes the decarboxylation of L-tyrosine to produce tyramine for methanofuran biosynthesis. Can also catalyze the decarboxylation of L-aspartate to produce beta-alanine for coenzyme A (CoA) biosynthesis. The sequence is that of Probable L-tyrosine/L-aspartate decarboxylase from Methanopyrus kandleri (strain AV19 / DSM 6324 / JCM 9639 / NBRC 100938).